A 333-amino-acid polypeptide reads, in one-letter code: Fructose-1,6-bisphosphatase class 1 (333 aa).

4 residues coordinate Mg(2+): glutamate 92, aspartate 113, leucine 115, and aspartate 116. Substrate-binding positions include 116–119, asparagine 209, tyrosine 242, and lysine 272; that span reads DGSS. Glutamate 278 contacts Mg(2+).

This sequence belongs to the FBPase class 1 family. As to quaternary structure, homotetramer. Mg(2+) serves as cofactor.

The protein localises to the cytoplasm. The catalysed reaction is beta-D-fructose 1,6-bisphosphate + H2O = beta-D-fructose 6-phosphate + phosphate. The protein operates within carbohydrate biosynthesis; Calvin cycle. This Chlorobium phaeovibrioides (strain DSM 265 / 1930) (Prosthecochloris vibrioformis (strain DSM 265)) protein is Fructose-1,6-bisphosphatase class 1.